Here is a 389-residue protein sequence, read N- to C-terminus: Altered inheritance of mitochondria protein 6 (389 aa).

The signal sequence occupies residues 1-23 (MMLLSQPGIWLLVSLFLCSSVNS).

It belongs to the AIM6 family.

The chain is Altered inheritance of mitochondria protein 6 (AIM6) from Eremothecium gossypii (strain ATCC 10895 / CBS 109.51 / FGSC 9923 / NRRL Y-1056) (Yeast).